Here is a 1336-residue protein sequence, read N- to C-terminus: Adhesion G protein-coupled receptor A2 (1336 aa).

The signal sequence occupies residues 1-33 (MGAGGRRMPVPPARLLLLPLLPCLLLLAPGTRG). Residues 34-769 (APGCPVPIRG…AGGSGAGLHP (736 aa)) lie on the Extracellular side of the membrane. 2 N-linked (GlcNAc...) asparagine glycosylation sites follow: Asn84 and Asn101. 4 LRR repeats span residues 85-106 (GTIT…SFLG), 109-130 (LLEK…AFLG), 133-154 (ELKR…TFQG), and 157-178 (RLLR…VFDE). The N-linked (GlcNAc...) asparagine glycan is linked to Asn162. One can recognise an LRRCT domain in the interval 190–241 (EFLTCDCRLRWLLPWARNHSLQLSERTLCAYPSALHAHALSSLQESQLRCEG). An Ig-like domain is found at 247 to 344 (THYLIPSLRQ…GNTSKKVEIV (98 aa)). Cys268 and Cys328 are disulfide-bonded. An N-linked (GlcNAc...) asparagine glycan is attached at Asn275. Positions 362–364 (RGD) match the RGD motif. Residues 594 to 757 (FRCTTGRPNI…AVLMELNAFP (164 aa)) enclose the GAIN-B domain. 3 N-linked (GlcNAc...) asparagine glycosylation sites follow: Asn602, Asn691, and Asn735. The interval 711-757 (AAWWNQDGPGGWSSEGCRLRYSQPNVSSLYCQHLGNVAVLMELNAFP) is GPS. Cys727 and Cys741 are disulfide-bonded. Residues 770–790 (VVYPCTALLLLCLFSTIITYI) form a helical membrane-spanning segment. The Cytoplasmic segment spans residues 791–805 (LNHSSIHVSRKGWHM). The chain crosses the membrane as a helical span at residues 806-826 (LLNLCFHMAMTSAVFVGGVTL). Residues 827–830 (TNYQ) are Extracellular-facing. A helical transmembrane segment spans residues 831 to 851 (MVCQAVGITLHYSSLSSLLWM). Over 852-884 (GVKARVLHKELSWRAPPLEEGEAAPPGPRPMLR) the chain is Cytoplasmic. The chain crosses the membrane as a helical span at residues 885–905 (FYLIAGGIPLIICGITAAVNI). The Extracellular segment spans residues 906-922 (HNYRDHSPYCWLVWRPS). A helical transmembrane segment spans residues 923-943 (LGAFYIPVALILPITWIYFLC). Residues 944–1016 (AGLHLRSHVA…DGVYSPGVQL (73 aa)) lie on the Cytoplasmic side of the membrane. A helical membrane pass occupies residues 1017 to 1037 (GALMTTHFLYLAMWACGALAV). The Extracellular portion of the chain corresponds to 1038–1044 (SQRWLPR). The helical transmembrane segment at 1045–1065 (VVCSCLYGVAASALGLFVFTH) threads the bilayer. At 1066 to 1336 (HCARRRDVRA…TGLWKSETTV (271 aa)) the chain is on the cytoplasmic side. Low complexity predominate over residues 1084–1095 (ASPSASHVPARA). The disordered stretch occupies residues 1084–1310 (ASPSASHVPA…NGAPKGGKYE (227 aa)). Position 1104 is a phosphoserine (Ser1104). Low complexity predominate over residues 1110-1124 (GPASLKSSPSGSSGR). Over residues 1133–1143 (TNLQVAQSQVC) the composition is skewed to polar residues. The span at 1166-1186 (PRHHNNLHHGRRVHKSRAKGH) shows a compositional bias: basic residues. Polar residues predominate over residues 1213 to 1234 (SSESGSLHNSPSDSYPGSSRNS). A PDZ-binding motif is present at residues 1333-1336 (ETTV).

Belongs to the G-protein coupled receptor 2 family. Adhesion G-protein coupled receptor (ADGR) subfamily. In terms of assembly, interacts with RECK; the interaction is direct. Interacts (via PDZ-binding motif) with DLG1 (via PDZ domains). The cleaved extracellular subunit interacts with the integrin heterodimer ITGAV:ITGB3. In terms of processing, glycosylated. Proteolytically cleaved into two subunits, an extracellular subunit and a seven-transmembrane subunit. Cleaved by thrombin (F2) and MMP1. Also cleaved by MMP9, with lower efficiency. Presence of the protein disulfide-isomerase P4HB at the cell surface is additionally required for shedding of the extracellular subunit, suggesting that the subunits are linked by disulfide bonds. Shedding is enhanced by the growth factor FGF2 and may promote cell survival during angiogenesis. As to expression, abundantly expressed in the vasculature of the developing embryo. Expression in normal adult tissues is specifically vascular with endothelial expression in CNS, including brain and retina and more widespread pericyte expression in the brain and organs, including the kidney, pancreas and corpus luteum.

The protein localises to the cell membrane. It localises to the cell projection. It is found in the filopodium. Its function is as follows. Endothelial receptor which functions together with RECK to enable brain endothelial cells to selectively respond to Wnt7 signals (WNT7A or WNT7B). Plays a key role in Wnt7-specific responses, such as endothelial cell sprouting and migration in the forebrain and neural tube, and establishment of the blood-brain barrier. Acts as a Wnt7-specific coactivator of canonical Wnt signaling: required to deliver RECK-bound Wnt7 to frizzled by assembling a higher-order RECK-ADGRA2-Fzd-LRP5-LRP6 complex. ADGRA2-tethering function does not rely on its G-protein coupled receptor (GPCR) structure but instead on its combined capacity to interact with RECK extracellularly and recruit the Dishevelled scaffolding protein intracellularly. Binds to the glycosaminoglycans heparin, heparin sulfate, chondroitin sulfate and dermatan sulfate. This is Adhesion G protein-coupled receptor A2 from Mus musculus (Mouse).